The sequence spans 278 residues: HTH-type transcriptional regulator HdfR (278 aa).

The HTH lysR-type domain occupies 1–58 (MDTELLKTFLEVSRTRHFGRAAEALYLTQSAVSFRIRQLENQLGVNLFTRHRNNIRLT). Residues 18–37 (FGRAAEALYLTQSAVSFRIR) constitute a DNA-binding region (H-T-H motif).

The protein belongs to the LysR transcriptional regulatory family.

Negatively regulates the transcription of the flagellar master operon flhDC by binding to the upstream region of the operon. In Salmonella schwarzengrund (strain CVM19633), this protein is HTH-type transcriptional regulator HdfR.